The sequence spans 579 residues: L-ascorbate oxidase (579 aa).

The first 30 residues, 1 to 30 (MLQMGKAREPNFLILFFFGLILAFGISSEG), serve as a signal peptide directing secretion. Plastocyanin-like domains follow at residues 33 to 152 (IRHY…LIVD) and 164 to 330 (DGEI…NYLP). Intrachain disulfides connect Cys-49-Cys-231, Cys-111-Cys-568, and Cys-210-Cys-223. Residues His-90 and His-92 each contribute to the Cu cation site. N-linked (GlcNAc...) asparagine glycosylation occurs at Asn-122. Residues His-134 and His-136 each coordinate Cu cation. 2 N-linked (GlcNAc...) asparagine glycosylation sites follow: Asn-355 and Asn-470. The region spanning 374–553 (NRRIFLLNTQ…HMGMGVVFAE (180 aa)) is the Plastocyanin-like 3 domain. Cu cation is bound by residues His-475, His-478, His-480, His-536, Cys-537, His-538, His-542, and Met-547.

The protein belongs to the multicopper oxidase family. In terms of assembly, dimer. It depends on Cu cation as a cofactor.

It localises to the secreted. The catalysed reaction is 4 L-ascorbate + O2 = 4 monodehydro-L-ascorbate radical + 2 H2O. Its function is as follows. May be involved in a redox system involving ascorbic acid. In Cucurbita maxima (Pumpkin), this protein is L-ascorbate oxidase (AAO).